The chain runs to 488 residues: Protein nucleotidyltransferase YdiU (488 aa).

Residues Gly-91, Gly-93, Arg-94, Lys-114, Asp-126, Gly-127, Arg-177, and Arg-184 each contribute to the ATP site. The active-site Proton acceptor is the Asp-253. Mg(2+)-binding residues include Asn-254 and Asp-263. An ATP-binding site is contributed by Asp-263.

The protein belongs to the SELO family. Mg(2+) serves as cofactor. It depends on Mn(2+) as a cofactor.

It carries out the reaction L-seryl-[protein] + ATP = 3-O-(5'-adenylyl)-L-seryl-[protein] + diphosphate. It catalyses the reaction L-threonyl-[protein] + ATP = 3-O-(5'-adenylyl)-L-threonyl-[protein] + diphosphate. The catalysed reaction is L-tyrosyl-[protein] + ATP = O-(5'-adenylyl)-L-tyrosyl-[protein] + diphosphate. The enzyme catalyses L-histidyl-[protein] + UTP = N(tele)-(5'-uridylyl)-L-histidyl-[protein] + diphosphate. It carries out the reaction L-seryl-[protein] + UTP = O-(5'-uridylyl)-L-seryl-[protein] + diphosphate. It catalyses the reaction L-tyrosyl-[protein] + UTP = O-(5'-uridylyl)-L-tyrosyl-[protein] + diphosphate. Its function is as follows. Nucleotidyltransferase involved in the post-translational modification of proteins. It can catalyze the addition of adenosine monophosphate (AMP) or uridine monophosphate (UMP) to a protein, resulting in modifications known as AMPylation and UMPylation. The polypeptide is Protein nucleotidyltransferase YdiU (Bacillus thuringiensis (strain Al Hakam)).